The sequence spans 86 residues: Toxin Aam3 (86 aa).

A signal peptide spans 1-19; the sequence is MNYLVMISLALLFMIGVES. In terms of domain architecture, LCN-type CS-alpha/beta spans 21 to 85; that stretch reads RDGYIAQPNN…PIKIIGQKCT (65 aa). 4 disulfide bridges follow: Cys-31-Cys-84, Cys-35-Cys-56, Cys-42-Cys-66, and Cys-46-Cys-68.

Belongs to the long (4 C-C) scorpion toxin superfamily. Sodium channel inhibitor family. Alpha subfamily. In terms of processing, the C-terminal basic residue is removed by a carboxypeptidase. In terms of tissue distribution, expressed by the venom gland.

It is found in the secreted. In terms of biological role, alpha toxins bind voltage-independently at site-3 of sodium channels (Nav) and inhibit the inactivation of the activated channels, thereby blocking neuronal transmission. In Androctonus amoreuxi (African fattail scorpion), this protein is Toxin Aam3.